A 418-amino-acid polypeptide reads, in one-letter code: Probable serine/threonine-protein kinase nek2 (418 aa).

Residues 4-264 (YEILGALGKG…VNELLGYSFI (261 aa)) enclose the Protein kinase domain. ATP-binding positions include 10 to 18 (LGKGSFGVV) and K33. Residue D135 is the Proton acceptor of the active site. The stretch at 278–363 (QGLKQMDEDL…SNLSLNCNNS (86 aa)) forms a coiled coil.

The protein belongs to the protein kinase superfamily. NEK Ser/Thr protein kinase family. NIMA subfamily.

The catalysed reaction is L-seryl-[protein] + ATP = O-phospho-L-seryl-[protein] + ADP + H(+). The enzyme catalyses L-threonyl-[protein] + ATP = O-phospho-L-threonyl-[protein] + ADP + H(+). Its function is as follows. Involved in centrosome biogenesis. Seems to be required for recruitment of centrosomal material and might be involved in de novo centrosome formation. The polypeptide is Probable serine/threonine-protein kinase nek2 (nek2) (Dictyostelium discoideum (Social amoeba)).